The chain runs to 337 residues: ELAV-like protein 1-A (337 aa).

RRM domains follow at residues 20–109 (TNLI…FARP), 117–197 (ANLY…FAAN), and 255–333 (WCIF…FKTS).

This sequence belongs to the RRM elav family. Interacts (via RRM3) with cirbp. Unable to form oligomers. Part of a ribonucleoprotein (RNP) complex, at least composed of elavl1/elrA and/or elavl2/elrB, igf2bp3/vg1RBP, ddx6/Xp54, ybx2/frgy2, lsm14b/rap55b and, in a subset of RNP complexes, stau1/staufen. In terms of tissue distribution, ubiquitously expressed in adults.

Its subcellular location is the cytoplasm. The protein resides in the cell cortex. Its function is as follows. RNA-binding protein that binds to the 3'-UTR region of mRNAs and increases their stability. Involved in embryonic stem cells (ESCs) differentiation: preferentially binds mRNAs that are not methylated by N6-methyladenosine (m6A), stabilizing them, promoting ESCs differentiation. Binds to poly-U elements and AU-rich elements (AREs) in the 3'-UTR of target mRNAs. May be involved in cytoplasmic mRNA polyadenylation. Acts cooperatively with cribp to stabilize AU-rich sequence (ARE)-containing mRNAs. May play a role during gastrulation. Required for the vegetal localization of vg1 mRNA. The chain is ELAV-like protein 1-A (elavl1-a) from Xenopus laevis (African clawed frog).